Reading from the N-terminus, the 98-residue chain is Large ribosomal subunit protein uL23 (98 aa).

It belongs to the universal ribosomal protein uL23 family. As to quaternary structure, part of the 50S ribosomal subunit. Contacts protein L29, and trigger factor when it is bound to the ribosome.

Its function is as follows. One of the early assembly proteins it binds 23S rRNA. One of the proteins that surrounds the polypeptide exit tunnel on the outside of the ribosome. Forms the main docking site for trigger factor binding to the ribosome. The protein is Large ribosomal subunit protein uL23 of Dinoroseobacter shibae (strain DSM 16493 / NCIMB 14021 / DFL 12).